Here is a 508-residue protein sequence, read N- to C-terminus: Photosystem II CP47 reaction center protein (508 aa).

The next 6 helical transmembrane spans lie at 21 to 36 (AVHI…WAGS), 101 to 115 (IVFS…IWHW), 140 to 156 (GIHL…FGTF), 203 to 218 (IAAG…FHLS), 237 to 252 (VLSS…AFVV), and 457 to 472 (SFAL…HGAR).

Belongs to the PsbB/PsbC family. PsbB subfamily. In terms of assembly, PSII is composed of 1 copy each of membrane proteins PsbA, PsbB, PsbC, PsbD, PsbE, PsbF, PsbH, PsbI, PsbJ, PsbK, PsbL, PsbM, PsbT, PsbX, PsbY, PsbZ, Psb30/Ycf12, at least 3 peripheral proteins of the oxygen-evolving complex and a large number of cofactors. It forms dimeric complexes. Requires Binds multiple chlorophylls. PSII binds additional chlorophylls, carotenoids and specific lipids. as cofactor.

The protein resides in the plastid. It localises to the chloroplast thylakoid membrane. Functionally, one of the components of the core complex of photosystem II (PSII). It binds chlorophyll and helps catalyze the primary light-induced photochemical processes of PSII. PSII is a light-driven water:plastoquinone oxidoreductase, using light energy to abstract electrons from H(2)O, generating O(2) and a proton gradient subsequently used for ATP formation. In Citrus sinensis (Sweet orange), this protein is Photosystem II CP47 reaction center protein.